The sequence spans 82 residues: Large ribosomal subunit protein bL27 (82 aa).

Residues 1-21 (MAHKKGASSSRNGRDSNAKRL) are disordered.

This sequence belongs to the bacterial ribosomal protein bL27 family.

In Tropheryma whipplei (strain Twist) (Whipple's bacillus), this protein is Large ribosomal subunit protein bL27.